The primary structure comprises 95 residues: Secretoglobin family 1C member 1 (95 aa).

Residues 1–23 form the signal peptide; it reads MKGSSALLLVALSLLCVCGLTRA.

The protein belongs to the secretoglobin family.

It localises to the secreted. This chain is Secretoglobin family 1C member 1 (Scgb1c1), found in Mus musculus (Mouse).